Reading from the N-terminus, the 104-residue chain is UPF0145 protein TM1040_1243 (104 aa).

It belongs to the UPF0145 family.

This is UPF0145 protein TM1040_1243 from Ruegeria sp. (strain TM1040) (Silicibacter sp.).